Here is a 429-residue protein sequence, read N- to C-terminus: Integral membrane protein GPR137C (429 aa).

Residues 1-17 (MRVSVPGPAAAAAPAAG) show a composition bias toward low complexity. The interval 1–29 (MRVSVPGPAAAAAPAAGREPSTPGGGSGG) is disordered. The Lumenal portion of the chain corresponds to 1 to 48 (MRVSVPGPAAAAAPAAGREPSTPGGGSGGGGAVAAASGAAVPGSVQLA). Residues 49–69 (LSVLHALLYAALFAFAYLQLW) form a helical membrane-spanning segment. Residues 70 to 83 (RLLLYRERRLSYQS) lie on the Cytoplasmic side of the membrane. The helical transmembrane segment at 84 to 104 (LCLFLCLLWAALRTTLFSAAF) threads the bilayer. Over 105–120 (SLSGSLPLLRPPAHLH) the chain is Lumenal. The helical transmembrane segment at 121–141 (FFPHWLLYCFPSCLQFSTLCL) threads the bilayer. Over 142–167 (LNLYLAEVICKVRCATELDRHKILLH) the chain is Cytoplasmic. A helical membrane pass occupies residues 168–188 (LGFIMASLLFLVVNLTCAMLV). At 189–205 (HGDVPENQLKWTVFVRA) the chain is on the lumenal side. Residues 206 to 226 (LINDSLFILCAISLVCYICKI) traverse the membrane as a helical segment. Topologically, residues 227–246 (TKMSSANVYLESKGMSLCQT) are cytoplasmic. Residues 247–267 (VVVGSVVILLYSSRACYNLVV) form a helical membrane-spanning segment. The Lumenal portion of the chain corresponds to 268-300 (VTISQDTLESPFNYGWDNLSDKAHVEDISGEEY). Asn285 carries an N-linked (GlcNAc...) asparagine glycan. The chain crosses the membrane as a helical span at residues 301-321 (IVFGMVLFLWEHVPAWSVVLF). The Cytoplasmic portion of the chain corresponds to 322–429 (FRAQRLNQNL…HHSLYVTPQN (108 aa)).

It belongs to the GPR137 family.

It is found in the lysosome membrane. Functionally, lysosomal integral membrane protein that may regulate MTORC1 complex translocation to lysosomes. This Homo sapiens (Human) protein is Integral membrane protein GPR137C (GPR137C).